Consider the following 198-residue polypeptide: Integrator complex subunit 8-like protein (198 aa).

This sequence belongs to the Integrator subunit 8 family. As to quaternary structure, component of the Integrator complex. The core complex associates with protein phosphatase 2A subunits, to form the Integrator-PP2A (INTAC) complex.

The protein localises to the nucleus. It localises to the chromosome. In terms of biological role, component of the integrator complex, a multiprotein complex that terminates RNA polymerase II (Pol II) transcription in the promoter-proximal region of genes. The integrator complex provides a quality checkpoint during transcription elongation by driving premature transcription termination of transcripts that are unfavorably configured for transcriptional elongation: the complex terminates transcription by (1) catalyzing dephosphorylation of the C-terminal domain (CTD) of Pol II subunit polr2a, (2) degrading the exiting nascent RNA transcript via endonuclease activity and (3) promoting the release of Pol II from bound DNA. The integrator complex is also involved in terminating the synthesis of non-coding Pol II transcripts, such as enhancer RNAs (eRNAs), small nuclear RNAs (snRNAs), telomerase RNAs and long non-coding RNAs (lncRNAs). Within the integrator complex, INTS8 is required for the recruitment of protein phosphatase 2A (PP2A) to transcription pause-release checkpoint. This is Integrator complex subunit 8-like protein from Dictyostelium discoideum (Social amoeba).